The sequence spans 332 residues: MKVAVLGAGAWGTALAAHLAARHDTLLWARDAALVAELAARRENVRYLDGVALPPALRYEADLTAALSHAQADDALCVIAAPVAGLRALCRAMRDAGRVPAHFVWVCKGFEADTRLLPHQMVAEELPDHASYGVLSGPSFAREVAQGLPVALTVASASAACRGRTLAAFHHGAMRIYTGDDVVGVEVGGAVKNVLAIATGIADGLGLGLNARAALVTRGLAEMSRLGVALGGRAETFTGLTGLGDLILTATGDLSRNRTVGLQLAAGRSLDDILAALGHVAEGVRCARAVLSIARERGVDMPITEAVCAVLFDGVAPRDAVSGLLRRDAKAE.

Trp-11, Arg-30, and Lys-108 together coordinate NADPH. Lys-108, Gly-137, and Ser-139 together coordinate sn-glycerol 3-phosphate. Ala-141 serves as a coordination point for NADPH. Residues Lys-192, Asp-245, Ser-255, Arg-256, and Asn-257 each coordinate sn-glycerol 3-phosphate. The active-site Proton acceptor is Lys-192. NADPH is bound at residue Arg-256. Residues Val-280 and Glu-282 each coordinate NADPH.

The protein belongs to the NAD-dependent glycerol-3-phosphate dehydrogenase family.

The protein localises to the cytoplasm. It carries out the reaction sn-glycerol 3-phosphate + NAD(+) = dihydroxyacetone phosphate + NADH + H(+). The catalysed reaction is sn-glycerol 3-phosphate + NADP(+) = dihydroxyacetone phosphate + NADPH + H(+). It functions in the pathway membrane lipid metabolism; glycerophospholipid metabolism. In terms of biological role, catalyzes the reduction of the glycolytic intermediate dihydroxyacetone phosphate (DHAP) to sn-glycerol 3-phosphate (G3P), the key precursor for phospholipid synthesis. This Burkholderia thailandensis (strain ATCC 700388 / DSM 13276 / CCUG 48851 / CIP 106301 / E264) protein is Glycerol-3-phosphate dehydrogenase [NAD(P)+].